Consider the following 694-residue polypeptide: Elongation factor G (694 aa).

A tr-type G domain is found at 8–283 (ERYRNIGIMA…AVIDYLPAPV (276 aa)). GTP contacts are provided by residues 17–24 (AHIDAGKT), 81–85 (DTPGH), and 135–138 (NKMD).

The protein belongs to the TRAFAC class translation factor GTPase superfamily. Classic translation factor GTPase family. EF-G/EF-2 subfamily.

The protein resides in the cytoplasm. Functionally, catalyzes the GTP-dependent ribosomal translocation step during translation elongation. During this step, the ribosome changes from the pre-translocational (PRE) to the post-translocational (POST) state as the newly formed A-site-bound peptidyl-tRNA and P-site-bound deacylated tRNA move to the P and E sites, respectively. Catalyzes the coordinated movement of the two tRNA molecules, the mRNA and conformational changes in the ribosome. The chain is Elongation factor G from Paramagnetospirillum magneticum (strain ATCC 700264 / AMB-1) (Magnetospirillum magneticum).